The sequence spans 696 residues: Methionine--tRNA ligase (696 aa).

The 'HIGH' region motif lies at 12 to 22 (PYANGPLHLGH). Zn(2+) is bound by residues cysteine 143, cysteine 146, cysteine 156, and cysteine 159. The 'KMSKS' region motif lies at 330–334 (KMSKS). Lysine 333 contacts ATP. In terms of domain architecture, tRNA-binding spans 593–696 (DFAKLDLRIG…AGAQPGMPVR (104 aa)).

The protein belongs to the class-I aminoacyl-tRNA synthetase family. MetG type 1 subfamily. Homodimer. Zn(2+) is required as a cofactor.

It is found in the cytoplasm. The enzyme catalyses tRNA(Met) + L-methionine + ATP = L-methionyl-tRNA(Met) + AMP + diphosphate. Its function is as follows. Is required not only for elongation of protein synthesis but also for the initiation of all mRNA translation through initiator tRNA(fMet) aminoacylation. The sequence is that of Methionine--tRNA ligase from Xanthomonas campestris pv. campestris (strain 8004).